Consider the following 130-residue polypeptide: Small ribosomal subunit protein uS9 (130 aa).

The protein belongs to the universal ribosomal protein uS9 family.

The sequence is that of Small ribosomal subunit protein uS9 from Buchnera aphidicola subsp. Acyrthosiphon pisum (strain 5A).